The chain runs to 507 residues: UDP-N-acetylmuramoyl-L-alanyl-D-glutamate--2,6-diaminopimelate ligase (507 aa).

Ser32 is a binding site for UDP-N-acetyl-alpha-D-muramoyl-L-alanyl-D-glutamate. 117–123 (GTNGKTT) is a binding site for ATP. UDP-N-acetyl-alpha-D-muramoyl-L-alanyl-D-glutamate-binding positions include 159-160 (TT), Ser186, Gln192, and Arg194. Lys226 is subject to N6-carboxylysine. Residues Arg400, 424-427 (DNPR), Gly475, and Glu479 each bind meso-2,6-diaminopimelate. Residues 424–427 (DNPR) carry the Meso-diaminopimelate recognition motif motif.

The protein belongs to the MurCDEF family. MurE subfamily. It depends on Mg(2+) as a cofactor. Carboxylation is probably crucial for Mg(2+) binding and, consequently, for the gamma-phosphate positioning of ATP.

Its subcellular location is the cytoplasm. The catalysed reaction is UDP-N-acetyl-alpha-D-muramoyl-L-alanyl-D-glutamate + meso-2,6-diaminopimelate + ATP = UDP-N-acetyl-alpha-D-muramoyl-L-alanyl-gamma-D-glutamyl-meso-2,6-diaminopimelate + ADP + phosphate + H(+). Its pathway is cell wall biogenesis; peptidoglycan biosynthesis. Its function is as follows. Catalyzes the addition of meso-diaminopimelic acid to the nucleotide precursor UDP-N-acetylmuramoyl-L-alanyl-D-glutamate (UMAG) in the biosynthesis of bacterial cell-wall peptidoglycan. The polypeptide is UDP-N-acetylmuramoyl-L-alanyl-D-glutamate--2,6-diaminopimelate ligase (Prochlorococcus marinus (strain MIT 9313)).